The sequence spans 136 residues: Ig heavy chain V region BCL1 (136 aa).

An N-terminal signal peptide occupies residues 1–19 (MGWSCIIFFLVATATGVHS). In terms of domain architecture, Ig-like spans 20-135 (QVQLQQSGPE…WGQGTTLTVS (116 aa)).

The chain is Ig heavy chain V region BCL1 from Mus musculus (Mouse).